The following is a 294-amino-acid chain: S-methyl-5'-thioadenosine phosphorylase (294 aa).

Residues Ser16, Arg58 to His59, and Ser91 to Ala92 each bind phosphate. Met189 serves as a coordination point for substrate. Thr190 contributes to the phosphate binding site. Asp213–Asp215 contributes to the substrate binding site.

Belongs to the PNP/MTAP phosphorylase family. MTAP subfamily. Homohexamer. Dimer of a homotrimer.

It carries out the reaction S-methyl-5'-thioadenosine + phosphate = 5-(methylsulfanyl)-alpha-D-ribose 1-phosphate + adenine. It catalyses the reaction 5'-deoxyadenosine + phosphate = 5-deoxy-alpha-D-ribose 1-phosphate + adenine. The protein operates within amino-acid biosynthesis; L-methionine biosynthesis via salvage pathway; S-methyl-5-thio-alpha-D-ribose 1-phosphate from S-methyl-5'-thioadenosine (phosphorylase route): step 1/1. Catalyzes the reversible phosphorylation of S-methyl-5'-thioadenosine (MTA) to adenine and 5-methylthioribose-1-phosphate. Involved in the breakdown of MTA, a major by-product of polyamine biosynthesis. Responsible for the first step in the methionine salvage pathway after MTA has been generated from S-adenosylmethionine. Has broad substrate specificity with 6-aminopurine nucleosides as preferred substrates. Also catalyzes the phosphorylation of 5'-deoxyadenosine (5'dAdo) to 5-deoxyribose 1-phosphate. Part of a bifunctional DHAP-shunt salvage pathway for SAM by-products. The polypeptide is S-methyl-5'-thioadenosine phosphorylase (Rhodospirillum rubrum (strain ATCC 11170 / ATH 1.1.1 / DSM 467 / LMG 4362 / NCIMB 8255 / S1)).